The primary structure comprises 1147 residues: Nucleolar protein 8 (1147 aa).

The 82-residue stretch at 8–89 folds into the RRM domain; that stretch reads KRLFVGGLGQ…GTLQIQLAKE (82 aa). Lysine 225 is covalently cross-linked (Glycyl lysine isopeptide (Lys-Gly) (interchain with G-Cter in SUMO2)). 2 positions are modified to phosphoserine: serine 300 and serine 306. A Glycyl lysine isopeptide (Lys-Gly) (interchain with G-Cter in SUMO2) cross-link involves residue lysine 316. Tyrosine 362 bears the Phosphotyrosine mark. Phosphoserine occurs at positions 364 and 365. Position 367 is a phosphothreonine (threonine 367). The disordered stretch occupies residues 379–401; sequence KVKNSAESSQPERTVSKKSSFQK. Residues 383–400 are compositionally biased toward polar residues; it reads SAESSQPERTVSKKSSFQ. Phosphoserine is present on serine 416. Disordered stretches follow at residues 427 to 452, 472 to 511, 592 to 659, 686 to 741, 766 to 888, 932 to 963, and 986 to 1017; these read KFVNPKFPPDSSGSDSEESEEDEEYK, AGSHRKFPGKDSETNGPQNDSHCKFDTTSKNPKTSGDLYN, MENG…PLKA, KALE…EDNQ, ANLD…NEDE, KHDHAIYERKQEDKEKESKATRKKKKEEAEKL, and SNTDEKEEDVPRTEAGAREGTGKIRNAETLAC. The span at 441-450 shows a compositional bias: acidic residues; that stretch reads DSEESEEDEE. Polar residues-rich tracts occupy residues 592–610 and 629–650; these read MENGSKCVNGSSSKLTSCQ and TFENQNHKVMSSTSCDKGSTNP. Composition is skewed to basic and acidic residues over residues 700 to 714 and 732 to 741; these read SLEKSSKVSPREDPQ and AKDKQAEDNQ. At serine 704 the chain carries Phosphoserine. Residue threonine 777 is modified to Phosphothreonine. 2 positions are modified to phosphoserine: serine 783 and serine 787. A compositionally biased stretch (basic and acidic residues) spans 799–809; that stretch reads CPEKELMKESV. Phosphoserine occurs at positions 819, 820, 825, 827, and 872. Positions 857–883 are enriched in basic and acidic residues; the sequence is SDERFRMDSRFLESDSEDEKKELNEDK. Coiled-coil stretches lie at residues 868–898 and 937–963; these read LESDSEDEKKELNEDKVNEDELAAEKKKTLN and IYERKQEDKEKESKATRKKKKEEAEKL. Residues 994–1011 show a composition bias toward basic and acidic residues; sequence DVPRTEAGAREGTGKIRN. A Glycyl lysine isopeptide (Lys-Gly) (interchain with G-Cter in SUMO2) cross-link involves residue lysine 1038. Residues 1055-1086 form a disordered region; sequence PNDPRFQDSSSEEEDIAEEADHSKPSPGEAVP. Residues serine 1063, serine 1064, serine 1065, and serine 1080 each carry the phosphoserine modification.

In terms of assembly, interacts with the GTP form of RRAGA, RRAGC and RRAGD. Interacts with NIP7. Interacts with DDX18; the interaction is RNA-dependent. Interacts with DDX47; the interaction is RNA-dependent. In terms of processing, phosphorylated.

Its subcellular location is the nucleus. The protein localises to the nucleolus. Functionally, plays an essential role in the survival of diffuse-type gastric cancer cells. Acts as a nucleolar anchoring protein for DDX47. May be involved in regulation of gene expression at the post-transcriptional level or in ribosome biogenesis in cancer cells. This is Nucleolar protein 8 from Mus musculus (Mouse).